The primary structure comprises 182 residues: NADH-quinone oxidoreductase subunit I (182 aa).

2 consecutive 4Fe-4S ferredoxin-type domains span residues 52–82 (LTRDPDGEERCVACNLCAVACPVGCISLQKA) and 92–121 (EFFRINFSRCIFCGLCEEACPTTAIQLTPD). Positions 62, 65, 68, 72, 101, 104, 107, and 111 each coordinate [4Fe-4S] cluster.

The protein belongs to the complex I 23 kDa subunit family. NDH-1 is composed of 13 different subunits. Subunits NuoA, H, J, K, L, M, N constitute the membrane sector of the complex. Requires [4Fe-4S] cluster as cofactor.

It localises to the cell inner membrane. It catalyses the reaction a quinone + NADH + 5 H(+)(in) = a quinol + NAD(+) + 4 H(+)(out). Functionally, NDH-1 shuttles electrons from NADH, via FMN and iron-sulfur (Fe-S) centers, to quinones in the respiratory chain. The immediate electron acceptor for the enzyme in this species is believed to be ubiquinone. Couples the redox reaction to proton translocation (for every two electrons transferred, four hydrogen ions are translocated across the cytoplasmic membrane), and thus conserves the redox energy in a proton gradient. This Pseudomonas aeruginosa (strain LESB58) protein is NADH-quinone oxidoreductase subunit I.